Reading from the N-terminus, the 168-residue chain is Endoribonuclease YbeY (168 aa).

Residues histidine 132, histidine 136, and histidine 142 each coordinate Zn(2+).

It belongs to the endoribonuclease YbeY family. Requires Zn(2+) as cofactor.

The protein localises to the cytoplasm. In terms of biological role, single strand-specific metallo-endoribonuclease involved in late-stage 70S ribosome quality control and in maturation of the 3' terminus of the 16S rRNA. This is Endoribonuclease YbeY from Clostridium perfringens (strain ATCC 13124 / DSM 756 / JCM 1290 / NCIMB 6125 / NCTC 8237 / Type A).